The chain runs to 217 residues: Non-structural protein NS3 (217 aa).

The protein belongs to the orbivirus NS3 family.

In terms of biological role, may play a role in the release of virions from infected cells. The polypeptide is Non-structural protein NS3 (Segment-10) (African horse sickness virus (AHSV)).